The chain runs to 595 residues: Elongation factor 4 2 (595 aa).

Residues 4–187 (SHIRNFAIIA…AIKQRLPAPQ (184 aa)) enclose the tr-type G domain. GTP-binding positions include 16–21 (DHGKST) and 133–136 (NKVD).

This sequence belongs to the TRAFAC class translation factor GTPase superfamily. Classic translation factor GTPase family. LepA subfamily.

The protein resides in the cell membrane. The catalysed reaction is GTP + H2O = GDP + phosphate + H(+). Required for accurate and efficient protein synthesis under certain stress conditions. May act as a fidelity factor of the translation reaction, by catalyzing a one-codon backward translocation of tRNAs on improperly translocated ribosomes. Back-translocation proceeds from a post-translocation (POST) complex to a pre-translocation (PRE) complex, thus giving elongation factor G a second chance to translocate the tRNAs correctly. Binds to ribosomes in a GTP-dependent manner. This Lactiplantibacillus plantarum (strain ATCC BAA-793 / NCIMB 8826 / WCFS1) (Lactobacillus plantarum) protein is Elongation factor 4 2.